Reading from the N-terminus, the 491-residue chain is Cobyric acid synthase (491 aa).

The 192-residue stretch at 250-441 folds into the GATase cobBQ-type domain; that stretch reads DLQITVVRLP…LHGLFDNGPW (192 aa). The active-site Nucleophile is the C331. Residue H433 is part of the active site.

It belongs to the CobB/CobQ family. CobQ subfamily.

It functions in the pathway cofactor biosynthesis; adenosylcobalamin biosynthesis. Functionally, catalyzes amidations at positions B, D, E, and G on adenosylcobyrinic A,C-diamide. NH(2) groups are provided by glutamine, and one molecule of ATP is hydrogenolyzed for each amidation. This Trichormus variabilis (strain ATCC 29413 / PCC 7937) (Anabaena variabilis) protein is Cobyric acid synthase.